Reading from the N-terminus, the 181-residue chain is Adenylyl-sulfate kinase (181 aa).

20 to 27 contacts ATP; that stretch reads GLSGAGKS. S94 serves as the catalytic Phosphoserine intermediate.

The protein belongs to the APS kinase family.

The catalysed reaction is adenosine 5'-phosphosulfate + ATP = 3'-phosphoadenylyl sulfate + ADP + H(+). The protein operates within sulfur metabolism; hydrogen sulfide biosynthesis; sulfite from sulfate: step 2/3. In terms of biological role, catalyzes the synthesis of activated sulfate. This is Adenylyl-sulfate kinase from Deinococcus geothermalis (strain DSM 11300 / CIP 105573 / AG-3a).